Here is a 150-residue protein sequence, read N- to C-terminus: Large ribosomal subunit protein bL9 (150 aa).

The protein belongs to the bacterial ribosomal protein bL9 family.

Functionally, binds to the 23S rRNA. The polypeptide is Large ribosomal subunit protein bL9 (Shewanella sp. (strain MR-4)).